The following is a 237-amino-acid chain: (5-formylfuran-3-yl)methyl phosphate synthase (237 aa).

K27 acts as the Schiff-base intermediate with substrate in catalysis. Residue K85 is the Proton acceptor of the active site.

It belongs to the MfnB family.

It carries out the reaction 2 D-glyceraldehyde 3-phosphate = 4-(hydroxymethyl)-2-furancarboxaldehyde phosphate + phosphate + 2 H2O. It functions in the pathway cofactor biosynthesis; methanofuran biosynthesis. Catalyzes the formation of 4-(hydroxymethyl)-2-furancarboxaldehyde phosphate (4-HFC-P) from two molecules of glyceraldehyde-3-P (GA-3-P). The polypeptide is (5-formylfuran-3-yl)methyl phosphate synthase (Methanobrevibacter smithii (strain ATCC 35061 / DSM 861 / OCM 144 / PS)).